Reading from the N-terminus, the 261-residue chain is Small ribosomal subunit protein eS4 (261 aa).

Residues 42-104 (LPLVIFLRNR…TGEFFRLIYD (63 aa)) enclose the S4 RNA-binding domain.

It belongs to the eukaryotic ribosomal protein eS4 family.

The protein is Small ribosomal subunit protein eS4 (RpS4) of Carabus granulatus (Ground beetle).